Here is a 128-residue protein sequence, read N- to C-terminus: L-ectoine synthase (128 aa).

The protein belongs to the ectoine synthase family.

The enzyme catalyses (2S)-4-acetamido-2-aminobutanoate = L-ectoine + H2O. The protein operates within amine and polyamine biosynthesis; ectoine biosynthesis; L-ectoine from L-aspartate 4-semialdehyde: step 3/3. Catalyzes the circularization of gamma-N-acetyl-alpha,gamma-diaminobutyric acid (ADABA) to ectoine (1,4,5,6-tetrahydro-2-methyl-4-pyrimidine carboxylic acid), which is an excellent osmoprotectant. This chain is L-ectoine synthase, found in Aliivibrio fischeri (strain ATCC 700601 / ES114) (Vibrio fischeri).